We begin with the raw amino-acid sequence, 1305 residues long: Nonribosomal peptide synthetase hkm11 (1305 aa).

The tract at residues 278–672 is adenylation; that stretch reads TYGELDRWAK…GEIEHHLRPK (395 aa). Residues 788-864 form the Carrier domain; that stretch reads APTTEQEALL…SLASRMRQYN (77 aa). O-(pantetheine 4'-phosphoryl)serine is present on S825. The segment at 926–1166 is condensation; it reads KGQLDRHQLQ…LCLNITAVRV (241 aa).

It belongs to the NRP synthetase family.

It carries out the reaction hancockiamide D + (E)-cinnamate + ATP = hancockiamide A + AMP + diphosphate. The enzyme catalyses hancockiamide H + (E)-cinnamate + ATP = hancockiamide G + AMP + diphosphate. Its pathway is secondary metabolite biosynthesis. Its function is as follows. Nonribosomal peptide synthetase; part of the gene cluster that mediates the biosynthesis of hancockiamides, an unusual new family of N-cinnamoylated piperazines. The NRPS hkm10 and the NmrA-like reductase hkm9 are proposed to convert two molecules of L-Phe to the intermediary piperazine called xenocockiamide A. Xenocockiamide A is then converted to hancockiamide D via a series of hydroxylations and O-methylations. The tyrosinase hkm6 may catalyze an aromatic hydroxylation, then the 2-oxoglutarate-dependent Fe(II) dioxygenase hkm4 and the FAD-dependent phenol hydroxylase hkm7 may catalyze consecutive hydroxylations to install 2 more hydroxy groups, and the methyltransferase hkm8 probably catalyzes two methylations using 2 molecules of S-adenosyl-L-methionine (SAM). The NRPS hkm11 activates and transfers trans-cinnamate supplied by the PAL hkm12 to hancockiamide D and produces hancockiamide A. NRPS Hkm11 has the flexibility to tolerate the bulky hancockiamide G as a substrate and the absence of the acetyl-transferase hkm3 opens up the opportunity for hkm11 to introduce a second N-cinnamoyl moiety. The cytochrome P450 monooxygenase hkm5 catalyzes the methylenedioxy bridge formation, converting hancockiamide A into hancockiamide G. Hkm5 can also convert hancockiamide B into hancockiamide C, and hancockiamide D into hancockiamide H. The N-acetyltransferase hkm3 finally transfers an acetyl group to 1-N of piperazine, converting hancockiamide A into hancockiamide B and hancockiamide G into hancockiamide C. The polypeptide is Nonribosomal peptide synthetase hkm11 (Aspergillus hancockii).